A 140-amino-acid polypeptide reads, in one-letter code: MSTIRCDIVSAEKEIFHGEATLVVATGELGELGIAPKHAPLITRLKPGKVVVTTANGEQLDFAISGGILEVQPQVVTILVDTAVRAQDIDEAAVRKVKEEAERLLANRGNTVDVAEAQRQLAEATVQLQALERLRRNLKH.

This sequence belongs to the ATPase epsilon chain family. In terms of assembly, F-type ATPases have 2 components, CF(1) - the catalytic core - and CF(0) - the membrane proton channel. CF(1) has five subunits: alpha(3), beta(3), gamma(1), delta(1), epsilon(1). CF(0) has three main subunits: a, b and c.

The protein localises to the cell inner membrane. In terms of biological role, produces ATP from ADP in the presence of a proton gradient across the membrane. In Xanthomonas axonopodis pv. citri (strain 306), this protein is ATP synthase epsilon chain.